We begin with the raw amino-acid sequence, 228 residues long: Latherin (228 aa).

The N-terminal stretch at 1–20 (MLKVSCLFVLLCGLLVPSSA) is a signal peptide. Cys153 and Cys196 are oxidised to a cystine.

Belongs to the BPI/LBP/Plunc superfamily. Plunc family. Monomer. No sign of N-X-[ST] acceptor site even though reported as N-glycosylated. Found in sweat (at protein level).

It is found in the secreted. In terms of biological role, major protein in sweat, has surfactant properties. Has a role in temperature regulation by having a capacity to make hydrophobic surfaces wettable and so can function in promoting spreading and evaporation of sweat. The polypeptide is Latherin (LATH) (Equus caballus (Horse)).